The primary structure comprises 277 residues: Phosphonates import ATP-binding protein PhnC 2 (277 aa).

The ABC transporter domain occupies Ile-5–Ala-253. Gly-37–Ser-44 contributes to the ATP binding site.

Belongs to the ABC transporter superfamily. Phosphonates importer (TC 3.A.1.9.1) family. As to quaternary structure, the complex is composed of two ATP-binding proteins (PhnC), two transmembrane proteins (PhnE) and a solute-binding protein (PhnD).

The protein resides in the cell inner membrane. It carries out the reaction phosphonate(out) + ATP + H2O = phosphonate(in) + ADP + phosphate + H(+). In terms of biological role, part of the ABC transporter complex PhnCDE involved in phosphonates import. Responsible for energy coupling to the transport system. The sequence is that of Phosphonates import ATP-binding protein PhnC 2 from Pseudomonas savastanoi pv. phaseolicola (strain 1448A / Race 6) (Pseudomonas syringae pv. phaseolicola (strain 1448A / Race 6)).